A 485-amino-acid chain; its full sequence is Glutamate--tRNA ligase (485 aa).

The short motif at 11–21 (PSPTGHLHIGN) is the 'HIGH' region element. Residues 252–256 (KLSKR) carry the 'KMSKS' region motif. Lysine 255 lines the ATP pocket.

The protein belongs to the class-I aminoacyl-tRNA synthetase family. Glutamate--tRNA ligase type 1 subfamily. In terms of assembly, monomer.

Its subcellular location is the cytoplasm. The catalysed reaction is tRNA(Glu) + L-glutamate + ATP = L-glutamyl-tRNA(Glu) + AMP + diphosphate. Its function is as follows. Catalyzes the attachment of glutamate to tRNA(Glu) in a two-step reaction: glutamate is first activated by ATP to form Glu-AMP and then transferred to the acceptor end of tRNA(Glu). This chain is Glutamate--tRNA ligase, found in Bacillus thuringiensis (strain Al Hakam).